A 346-amino-acid chain; its full sequence is MGQDKLKVAVLFGGSSEERDVSIASGAQVIQALRSAGHQVLAVDTASGLLGAEEERRLLASKVKEVPPDSDSLAIIRSGKQSLLSAGELAGVDVFFLALHGGTGEDGTLQALLDAGGFAYTGSGHLASAMAMDKDVAKRLFLAAGVETASWLMAPASEEEVREQLGFPLVVKPNSQGSTVGLSIVHSQAELQPAIELAGRYGDEVMLERFVAGREVTVGVLDDQALPVGEILLGGQEVFDYEHKYQAGAVREVFPADLPPAIAAEAQRLALKVHRALKLSGYSRTDFRLDEQGRLWCLEVNTLPGMTATSLLPQAAAAAGIGFAELCERICRLGIERCKGARKARS.

One can recognise an ATP-grasp domain in the interval 138-332; that stretch reads KRLFLAAGVE…FAELCERICR (195 aa). Position 164–217 (164–217) interacts with ATP; that stretch reads QLGFPLVVKPNSQGSTVGLSIVHSQAELQPAIELAGRYGDEVMLERFVAGREVT. Residues Asp286, Glu299, and Asn301 each contribute to the Mg(2+) site.

The protein belongs to the D-alanine--D-alanine ligase family. Requires Mg(2+) as cofactor. Mn(2+) is required as a cofactor.

The protein resides in the cytoplasm. It catalyses the reaction 2 D-alanine + ATP = D-alanyl-D-alanine + ADP + phosphate + H(+). Its pathway is cell wall biogenesis; peptidoglycan biosynthesis. Cell wall formation. The polypeptide is D-alanine--D-alanine ligase A (Pseudomonas aeruginosa (strain ATCC 15692 / DSM 22644 / CIP 104116 / JCM 14847 / LMG 12228 / 1C / PRS 101 / PAO1)).